A 320-amino-acid chain; its full sequence is Putative polysaccharide deacetylase (320 aa).

In terms of domain architecture, NodB homology spans Arg69–Ala303.

It belongs to the polysaccharide deacetylase family. Homodimer.

The protein resides in the prospore. Functionally, may deacetylate chitin. Required for spore formation. The protein is Putative polysaccharide deacetylase of Schizosaccharomyces pombe (strain 972 / ATCC 24843) (Fission yeast).